A 123-amino-acid chain; its full sequence is Small ribosomal subunit protein uS12c (123 aa).

The segment covering Met-1–Lys-20 has biased composition (polar residues). Residues Met-1 to Cys-27 are disordered.

This sequence belongs to the universal ribosomal protein uS12 family. In terms of assembly, part of the 30S ribosomal subunit.

The protein localises to the plastid. The protein resides in the chloroplast. In terms of biological role, with S4 and S5 plays an important role in translational accuracy. Located at the interface of the 30S and 50S subunits. In Zygnema circumcarinatum (Green alga), this protein is Small ribosomal subunit protein uS12c (rps12).